A 157-amino-acid chain; its full sequence is S-ribosylhomocysteine lyase (157 aa).

Residues His54, His58, and Cys126 each contribute to the Fe cation site.

The protein belongs to the LuxS family. As to quaternary structure, homodimer. Requires Fe cation as cofactor.

It catalyses the reaction S-(5-deoxy-D-ribos-5-yl)-L-homocysteine = (S)-4,5-dihydroxypentane-2,3-dione + L-homocysteine. Functionally, involved in the synthesis of autoinducer 2 (AI-2) which is secreted by bacteria and is used to communicate both the cell density and the metabolic potential of the environment. The regulation of gene expression in response to changes in cell density is called quorum sensing. Catalyzes the transformation of S-ribosylhomocysteine (RHC) to homocysteine (HC) and 4,5-dihydroxy-2,3-pentadione (DPD). This Bacillus cytotoxicus (strain DSM 22905 / CIP 110041 / 391-98 / NVH 391-98) protein is S-ribosylhomocysteine lyase.